The sequence spans 335 residues: Probable cyclin-H (335 aa).

It belongs to the cyclin family. Cyclin C subfamily.

Its subcellular location is the nucleus. In terms of biological role, regulates CDK7, the catalytic subunit of the CDK-activating kinase (CAK) enzymatic complex. In Echinococcus multilocularis (Fox tapeworm), this protein is Probable cyclin-H (CYCH).